The sequence spans 500 residues: Metacaspase-5 (500 aa).

Positions 1 to 18 (MDAALALLFGQVATAVLP) are cleaved as a signal peptide. Positions 19–63 (YVVNSIGRVPRPKRVDVKKAMGEAHQCRPVVPYRAPRPYTEGRVK) are important for catalytic activity. 2 N-linked (GlcNAc...) asparagine glycosylation sites follow: Asn-70 and Asn-113. Residue His-147 is part of the active site. Residues Asp-162, Asp-178, and Asp-179 each coordinate Ca(2+). Cys-202 is a catalytic residue. Asp-209 serves as a coordination point for Ca(2+). Asn-219, Asn-235, Asn-258, Asn-264, Asn-283, and Asn-332 each carry an N-linked (GlcNAc...) asparagine glycan. 2 disordered regions span residues 358-419 (EATL…QAYY) and 444-500 (QPPQ…PGRK). The span at 379-389 (ASTSNGKSNPG) shows a compositional bias: polar residues. Over residues 444-461 (QPPQQAYYQPPQQAYYQP) the composition is skewed to low complexity.

Belongs to the peptidase C14B family.

It is found in the recycling endosome. In terms of biological role, cysteine protease that cleaves specifically after arginine or lysine residues. The protein is Metacaspase-5 of Trypanosoma brucei brucei.